The sequence spans 61 residues: Large ribosomal subunit protein uL30 (61 aa).

It belongs to the universal ribosomal protein uL30 family. In terms of assembly, part of the 50S ribosomal subunit.

The polypeptide is Large ribosomal subunit protein uL30 (Neisseria meningitidis serogroup C (strain 053442)).